We begin with the raw amino-acid sequence, 365 residues long: Cytosolic 5'-nucleotidase 1A (365 aa).

Positions 1–11 (MEPGQPREARE) are enriched in basic and acidic residues. Positions 1-23 (MEPGQPREAREPGPGAETAAVPR) are disordered. Catalysis depends on Asp208, which acts as the Nucleophile.

This sequence belongs to the 5'-nucleotidase type 3 family. It depends on Mg(2+) as a cofactor.

It is found in the cytoplasm. The enzyme catalyses a ribonucleoside 5'-phosphate + H2O = a ribonucleoside + phosphate. It carries out the reaction a 2'-deoxyribonucleoside 5'-phosphate + H2O = a 2'-deoxyribonucleoside + phosphate. It catalyses the reaction IMP + H2O = inosine + phosphate. The catalysed reaction is AMP + H2O = adenosine + phosphate. The enzyme catalyses dCMP + H2O = 2'-deoxycytidine + phosphate. With respect to regulation, activated by ADP. Functionally, catalyzes the hydrolysis of ribonucleotide and deoxyribonucleotide monophosphates, releasing inorganic phosphate and the corresponding nucleoside. AMP is the major substrate but can also hydrolyze dCMP and IMP. In Mus musculus (Mouse), this protein is Cytosolic 5'-nucleotidase 1A (Nt5c1a).